A 209-amino-acid chain; its full sequence is Glycine cleavage system H-like protein gcvH4 (209 aa).

Residues 35 to 51 (NNNNNNNNNNNNNNNNN) show a composition bias toward low complexity. The segment at 35-56 (NNNNNNNNNNNNNNNNNRNKKL) is disordered. Positions 73-159 (FATIGITNYV…KTTTTTTKIK (87 aa)) constitute a Lipoyl-binding domain.

It belongs to the GcvH family.

The chain is Glycine cleavage system H-like protein gcvH4 (gcvH4) from Dictyostelium discoideum (Social amoeba).